The sequence spans 249 residues: 3-deoxy-manno-octulosonate cytidylyltransferase (249 aa).

This sequence belongs to the KdsB family.

The protein resides in the cytoplasm. The catalysed reaction is 3-deoxy-alpha-D-manno-oct-2-ulosonate + CTP = CMP-3-deoxy-beta-D-manno-octulosonate + diphosphate. The protein operates within nucleotide-sugar biosynthesis; CMP-3-deoxy-D-manno-octulosonate biosynthesis; CMP-3-deoxy-D-manno-octulosonate from 3-deoxy-D-manno-octulosonate and CTP: step 1/1. Its pathway is bacterial outer membrane biogenesis; lipopolysaccharide biosynthesis. Functionally, activates KDO (a required 8-carbon sugar) for incorporation into bacterial lipopolysaccharide in Gram-negative bacteria. The polypeptide is 3-deoxy-manno-octulosonate cytidylyltransferase (Serratia proteamaculans (strain 568)).